A 492-amino-acid chain; its full sequence is Lysine--tRNA ligase (492 aa).

Mg(2+) is bound by residues aspartate 395 and glutamate 402.

The protein belongs to the class-II aminoacyl-tRNA synthetase family. In terms of assembly, homodimer. Requires Mg(2+) as cofactor.

It is found in the cytoplasm. It carries out the reaction tRNA(Lys) + L-lysine + ATP = L-lysyl-tRNA(Lys) + AMP + diphosphate. The protein is Lysine--tRNA ligase of Thermus thermophilus (strain ATCC BAA-163 / DSM 7039 / HB27).